Reading from the N-terminus, the 184-residue chain is uncharacterized protein (184 aa).

It belongs to the eIF-2B alpha/beta/delta subunits family.

This is an uncharacterized protein from Rhodospirillum rubrum.